Reading from the N-terminus, the 339-residue chain is Anthranilate phosphoribosyltransferase (339 aa).

5-phospho-alpha-D-ribose 1-diphosphate contacts are provided by residues glycine 82, 85-86, threonine 90, 92-95, and 110-118; these read GD, NIST, and KHGNRAVSS. Glycine 82 is an anthranilate binding site. Serine 94 lines the Mg(2+) pocket. Residues asparagine 113 and arginine 168 each coordinate anthranilate. Mg(2+)-binding residues include aspartate 227 and glutamate 228.

The protein belongs to the anthranilate phosphoribosyltransferase family. Homodimer. Mg(2+) is required as a cofactor.

The enzyme catalyses N-(5-phospho-beta-D-ribosyl)anthranilate + diphosphate = 5-phospho-alpha-D-ribose 1-diphosphate + anthranilate. The protein operates within amino-acid biosynthesis; L-tryptophan biosynthesis; L-tryptophan from chorismate: step 2/5. Its function is as follows. Catalyzes the transfer of the phosphoribosyl group of 5-phosphorylribose-1-pyrophosphate (PRPP) to anthranilate to yield N-(5'-phosphoribosyl)-anthranilate (PRA). This is Anthranilate phosphoribosyltransferase from Clostridium beijerinckii (strain ATCC 51743 / NCIMB 8052) (Clostridium acetobutylicum).